Here is a 975-residue protein sequence, read N- to C-terminus: MKNRIKKGSSMIGVYGRSDGSSSIQSSNGSESRESIDDNKQGHQSLVEWLNETLPYLNLPWEASEEELRACLVDGTVLCNLLNQLSPGSMRMGGSFEPGCVNIERFLAAMDEMTLPRFEVSDLEQGDMIRVIQSLKALKASFSDDGYDKNTLSARRRWSLPADHSKGVDSNFNDGGSQFIEASEINTSHHSLQNTSTRSLFDMLDRLLDESSQKMNVSHVYVSILRGIVQVVEQRISNQAENLKNQNILFRVREEKYRSRINVLETLASGTTDENEVRRKRCAPNRKGKERSNAELSKLKQELEIVKETHEKQFLELKLNAQKAKVELERQVKNSELRVVEAKELEKLCETKTKRWEKKEQTYKRFINHQTEALQELKATSMSLKHDVLKIGENYFLDLTYYGIKLRGVAHAAKNYQIIIEENRRLYNEVQELKGNIRVYCRIRPFLQGQNKKQTSIEYTGENGELVVANPLKQGKDTYRLFKFNKVFGPESTQEEVFLDTRPMIRSILDGYNVCIFAYGQTGSGKTYTMSGPSITSEEDRGVNYRALNDLFHLTQSRQNSVMYEVGVQMVEIYNEQVRDLLSQDVPDASMHSVRSTEDVLELMNIGLMNRTVGATTLNEKSSRSHSVLSVHVRGVDVKTESVLRGSLHLVDLAGSERVGRSEVTGERLKEAQHINKSLSALGDVIFALAHKNPHVPYRNSKLTQVLQNSLGGQAKTLMFVQINPDEDSYAETVSTLKFAERVSGVELGAARSYKEGRDVRQLMEQVSNLKDMIAKKDEELQKFQNINGIQKRGLSKLRIVSPPRRHSLGGALTNSPRRRQGPGLLGRTTSDIHRHQNESRSSSKFSGGAKDNNIFEDTELLGFEESNNEERLSDISDSCLSMGTETDGSISSGAMELTLFPETSNPPEMFEQSEQNDKAHVGVGPSKPLKHTPKPDISKPSRLSISTTSSKALTSSKRPVTGISSSVKPLNRKR.

The interval 1–40 is disordered; sequence MKNRIKKGSSMIGVYGRSDGSSSIQSSNGSESRESIDDNK. Residues 17–30 are compositionally biased toward low complexity; the sequence is RSDGSSSIQSSNGS. The span at 31–40 shows a compositional bias: basic and acidic residues; the sequence is ESRESIDDNK. Residues 40–143 enclose the Calponin-homology (CH) domain; the sequence is KQGHQSLVEW…SLKALKASFS (104 aa). A coiled-coil region spans residues 289-345; that stretch reads KERSNAELSKLKQELEIVKETHEKQFLELKLNAQKAKVELERQVKNSELRVVEAKEL. The Kinesin motor domain occupies 436–746; that stretch reads NIRVYCRIRP…LKFAERVSGV (311 aa). Residue 520 to 527 participates in ATP binding; sequence GQTGSGKT. The stretch at 757-788 forms a coiled coil; that stretch reads GRDVRQLMEQVSNLKDMIAKKDEELQKFQNIN. Disordered stretches follow at residues 801–852 and 900–975; these read VSPP…GAKD and LFPE…NRKR. The span at 944-958 shows a compositional bias: low complexity; the sequence is LSISTTSSKALTSSK.

The protein belongs to the TRAFAC class myosin-kinesin ATPase superfamily. Kinesin family. KIN-14 subfamily.

This chain is Kinesin-like protein KIN-14K, found in Arabidopsis thaliana (Mouse-ear cress).